Reading from the N-terminus, the 444-residue chain is 23S rRNA (uracil(1939)-C(5))-methyltransferase RlmD (444 aa).

The 63-residue stretch at 5–67 (RSRIDRTPFQ…RHFDEARTVE (63 aa)) folds into the TRAM domain. Cys80, Cys86, Cys89, and Cys168 together coordinate [4Fe-4S] cluster. Residues Gln276, Phe305, Asn310, Glu326, Asp353, and Asp374 each contribute to the S-adenosyl-L-methionine site. Catalysis depends on Cys400, which acts as the Nucleophile.

It belongs to the class I-like SAM-binding methyltransferase superfamily. RNA M5U methyltransferase family. RlmD subfamily.

The catalysed reaction is uridine(1939) in 23S rRNA + S-adenosyl-L-methionine = 5-methyluridine(1939) in 23S rRNA + S-adenosyl-L-homocysteine + H(+). In terms of biological role, catalyzes the formation of 5-methyl-uridine at position 1939 (m5U1939) in 23S rRNA. The sequence is that of 23S rRNA (uracil(1939)-C(5))-methyltransferase RlmD from Stenotrophomonas maltophilia (strain R551-3).